A 1244-amino-acid chain; its full sequence is Putative late blight resistance protein homolog R1A-4 (1244 aa).

2 coiled-coil regions span residues 411 to 434 (RYSD…ESLQ) and 526 to 548 (PRMN…QLLN). An NB-ARC domain is found at 527–755 (RMNEEIVGFK…ECWEQVANDL (229 aa)). 560–567 (GMPGLGKT) lines the ATP pocket. 5 LRR repeats span residues 978 to 1004 (LWNL…VWDM), 1079 to 1103 (PIRL…ISAP), 1127 to 1150 (LKNL…KVSN), 1153 to 1178 (FPQL…AFPN), and 1213 to 1237 (ESVV…NFKL).

Belongs to the disease resistance NB-LRR family.

The protein resides in the cytoplasm. It is found in the membrane. Functionally, confers resistance to late blight (Phytophthora infestans) races carrying the avirulence gene Avr1. Resistance proteins guard the plant against pathogens that contain an appropriate avirulence protein via an indirect interaction with this avirulence protein. That triggers a defense system including the hypersensitive response, which restricts the pathogen growth. This Solanum demissum (Wild potato) protein is Putative late blight resistance protein homolog R1A-4 (R1A-4).